Here is a 132-residue protein sequence, read N- to C-terminus: Small ribosomal subunit protein uS11 (132 aa).

It belongs to the universal ribosomal protein uS11 family. Part of the 30S ribosomal subunit.

Its function is as follows. Located on the platform of the 30S subunit. The sequence is that of Small ribosomal subunit protein uS11 from Caldivirga maquilingensis (strain ATCC 700844 / DSM 13496 / JCM 10307 / IC-167).